The sequence spans 134 residues: Retinoid-binding protein 7 (134 aa).

Belongs to the calycin superfamily. Fatty-acid binding protein (FABP) family. In terms of tissue distribution, highly expressed in white adipose tissue and mammary gland.

The protein localises to the cytoplasm. Its function is as follows. Intracellular transport of retinol. This is Retinoid-binding protein 7 (Rbp7) from Mus musculus (Mouse).